We begin with the raw amino-acid sequence, 431 residues long: 5-methylthioadenosine/S-adenosylhomocysteine deaminase (431 aa).

Histidine 68 and histidine 70 together coordinate Zn(2+). The substrate site is built by glutamate 97 and histidine 186. Histidine 213 lines the Zn(2+) pocket. Glutamate 216 and aspartate 301 together coordinate substrate. Position 301 (aspartate 301) interacts with Zn(2+).

The protein belongs to the metallo-dependent hydrolases superfamily. MTA/SAH deaminase family. It depends on Zn(2+) as a cofactor.

It carries out the reaction S-adenosyl-L-homocysteine + H2O + H(+) = S-inosyl-L-homocysteine + NH4(+). It catalyses the reaction S-methyl-5'-thioadenosine + H2O + H(+) = S-methyl-5'-thioinosine + NH4(+). In terms of biological role, catalyzes the deamination of 5-methylthioadenosine and S-adenosyl-L-homocysteine into 5-methylthioinosine and S-inosyl-L-homocysteine, respectively. Is also able to deaminate adenosine. This chain is 5-methylthioadenosine/S-adenosylhomocysteine deaminase, found in Halothermothrix orenii (strain H 168 / OCM 544 / DSM 9562).